The chain runs to 435 residues: GTPase Der (435 aa).

EngA-type G domains follow at residues 3–168 (PLVA…PDET) and 176–351 (IKLA…QNRQ). GTP is bound by residues 9–16 (GRPNVGKS), 56–60 (DTGGY), 120–123 (NKVE), 182–189 (GRPNVGKS), 229–233 (DTAGL), and 294–297 (NKWD). In terms of domain architecture, KH-like spans 352–435 (KKISTSELNR…VPVSFRYRKK (84 aa)).

Belongs to the TRAFAC class TrmE-Era-EngA-EngB-Septin-like GTPase superfamily. EngA (Der) GTPase family. In terms of assembly, associates with the 50S ribosomal subunit.

Functionally, GTPase that plays an essential role in the late steps of ribosome biogenesis. The chain is GTPase Der from Chlorobium phaeobacteroides (strain BS1).